We begin with the raw amino-acid sequence, 373 residues long: Probable G-protein coupled receptor 173 (373 aa).

Topologically, residues 1–26 are extracellular; the sequence is MANTTGEPEEVSGALSLPSASAYVKL. A glycan (N-linked (GlcNAc...) asparagine) is linked at Asn-3. The chain crosses the membrane as a helical span at residues 27–47; the sequence is VLLGLIMCVSLAGNAILSLLV. Residues 48–59 are Cytoplasmic-facing; sequence LKERALHKAPYY. A helical transmembrane segment spans residues 60–80; that stretch reads FLLDLCLADGIRSAICFPFVL. The Extracellular portion of the chain corresponds to 81–97; sequence ASVRHGSSWTFSALSCK. An intrachain disulfide couples Cys-96 to Cys-174. A helical membrane pass occupies residues 98-118; the sequence is IVAFMAVLFCFHAAFMLFCIS. Residues 119–139 lie on the Cytoplasmic side of the membrane; the sequence is VTRYMAIAHHRFYAKRMTLWT. A helical transmembrane segment spans residues 140–160; that stretch reads CAAVICMAWTLSVAMAFPPVF. Topologically, residues 161 to 188 are extracellular; the sequence is DVGTYKFIREEDQCIFEHRYFKANDTLG. Asn-184 carries N-linked (GlcNAc...) asparagine glycosylation. A helical membrane pass occupies residues 189–209; that stretch reads FMLMLAVLMAATHAVYGKLLL. At 210–287 the chain is on the cytoplasmic side; that stretch reads FEYRHRKMKP…VKGEKQLGRM (78 aa). A helical membrane pass occupies residues 288-308; that stretch reads FYAITLLFLLLWSPYIVACYW. Topologically, residues 309-322 are extracellular; that stretch reads RVFVKACAVPHRYL. Residues 323–343 traverse the membrane as a helical segment; the sequence is ATAVWMSFAQAAVNPIVCFLL. Residues 344 to 373 are Cytoplasmic-facing; it reads NKDLKKCLRTHAPCWGTGGAPAPREPYCVM.

It belongs to the G-protein coupled receptor 1 family. As to expression, expressed in the ovary, specifically in granulosa cells of follicles that have passed the primary stage and in oocytes (at protein level). Expressed in preadipocytes.

The protein resides in the cell membrane. In terms of biological role, is a receptor for the SMIM20 derived peptides Phoenixin-14 and Phoenixin-20. It mediates the Phoenixin-14 and Phoenixin-20 augmentation of gonadotropin-releasing hormone (GNRH) signaling in the hypothalamus and pituitary gland. In the ovary, it mediates the effects of Phoenixin-14 and Phoenixin-20 induced granulosa cell proliferation during follicular growth. This chain is Probable G-protein coupled receptor 173 (Gpr173), found in Mus musculus (Mouse).